Reading from the N-terminus, the 357-residue chain is 2-oxoglutarate-dependent dioxygenase 11 (357 aa).

The 101-residue stretch at 207-307 folds into the Fe2OG dioxygenase domain; it reads QPRGLRMAYY…RISAALFHYP (101 aa). H231, D233, and H288 together coordinate Fe cation. Residue R298 participates in 2-oxoglutarate binding.

This sequence belongs to the iron/ascorbate-dependent oxidoreductase family. Requires Fe(2+) as cofactor. It depends on L-ascorbate as a cofactor. As to expression, expressed in shoots.

The protein localises to the cytoplasm. It catalyses the reaction melatonin + 2-oxoglutarate + O2 = 2-hydroxymelatonin + succinate + CO2. Its function is as follows. Involved in melatonin degradation. Catalyzes the hydroxylation of melatonin to produce 2-hydroxymelatonin. The chain is 2-oxoglutarate-dependent dioxygenase 11 from Oryza sativa subsp. japonica (Rice).